The chain runs to 1286 residues: ABC transporter B family member 1 (1286 aa).

Transmembrane regions (helical) follow at residues 42–62 and 93–113; these read VLMG…PLFL and FLVV…CWMW. The ABC transmembrane type-1 1 domain occupies 44-333; sequence MGIGSVGAFV…SAPSMAAFAK (290 aa). Aspartate 139 contributes to the ATP binding site. 2 helical membrane-spanning segments follow: residues 166 to 186 and 187 to 207; these read LGNF…GFTA and VWQL…IGGI. Asparagine 217 carries N-linked (GlcNAc...) asparagine glycosylation. Helical transmembrane passes span 277-297 and 301-321; these read ATYF…GYLV and LTNG…GLAL. A brassinolide-binding site is contributed by tyrosine 286. The region spanning 368–604 is the ABC transporter 1 domain; it reads VELKNVDFSY…GENGVYAKLI (237 aa). The ATP site is built by tyrosine 377, serine 379, arginine 380, glycine 408, lysine 409, serine 410, and threonine 411. The disordered stretch occupies residues 614 to 647; the sequence is AMSNARKSSARPSSARNSVSSPIMTRNSSYGRSP. Positions 616 to 635 are enriched in low complexity; that stretch reads SNARKSSARPSSARNSVSSP. Asparagine 640 is a glycosylation site (N-linked (GlcNAc...) asparagine). Residues 700-988 enclose the ABC transmembrane type-1 2 domain; it reads ALLGSVGSVI…TLTLAPDFIK (289 aa). Helical transmembrane passes span 705–725 and 745–765; these read VGSV…SAVL and YLLI…HSFW. Asparagine 771 carries N-linked (GlcNAc...) asparagine glycosylation. Aspartate 793 lines the ATP pocket. Asparagine 797 is a glycosylation site (N-linked (GlcNAc...) asparagine). A run of 4 helical transmembrane segments spans residues 821–843, 845–867, 932–952, and 967–987; these read ISVI…VLQW, LALV…KMFM, VAQF…SWLV, and MVLM…PDFI. Brassinolide-binding residues include tyrosine 941 and glutamate 978. One can recognise an ABC transporter 2 domain in the interval 1024-1260; the sequence is VELKHIDFSY…HPDGIYARMI (237 aa). ATP contacts are provided by tyrosine 1033, arginine 1036, glycine 1064, lysine 1065, and serine 1066. Residues 1049-1286 are interaction with FKBP42/TWD1; the sequence is ARAGKTLALV…SSSRVKEDDA (238 aa).

It belongs to the ABC transporter superfamily. ABCB family. Multidrug resistance exporter (TC 3.A.1.201) subfamily. Interacts with 1-naphthylphthalamic acid (NPA) and FKBP42/TWD1. In terms of tissue distribution, ubiquitous, with high levels in peduncles. Mostly localized in young developing tissues, including meristems, as well as root and shoot apices.

It is found in the cell membrane. It catalyses the reaction (indol-3-yl)acetate(in) + ATP + H2O = (indol-3-yl)acetate(out) + ADP + phosphate + H(+). The enzyme catalyses brassinolide(in) + ATP + H2O = brassinolide(out) + ADP + phosphate + H(+). The catalysed reaction is 24-epi-brassinolide(in) + ATP + H2O = 24-epi-brassinolide(out) + ADP + phosphate + H(+). It carries out the reaction 24-epi-castasterone(in) + ATP + H2O = 24-epi-castasterone(out) + ADP + phosphate + H(+). It catalyses the reaction castasterone(in) + ATP + H2O = castasterone(out) + ADP + phosphate + H(+). Transport capacity is stimulated by the chaperone protein FKBP42/TWD1. Transport activity inhibited by 1-N-naphthylphthalamic acid (NPA), cyclopropyl propane dione (CPD), cyclosporin A, verapamil and quercetin. ATPase activity is specifically activated by bioactive brassinosteroids in a dose-dependent manner, including brassinolide (BL), 24-epiBL, 24-epicastasterone (24-epiCS) and castasterone-alkyne; BL binding leads to structural changes. Inhibited by vanadate. Brassinosteroid exporter that, in conjunction with ABCB19, supports the accumulation of exogenous brassinosteroids (BR) in the apoplast, thus promoting BR signaling initiation involving the specific receptor BRI1 and required for plant growth and stress responses. Auxin efflux transporter that acts as a negative regulator of light signaling to promote hypocotyl elongation. May contribute to the regulation of leaf position and morphology during PHOT1-mediated blue light responses involving auxin distribution, especially in low light fluence. Together with ABCB19 and in a FKBP42/TWD1-dependent manner, supports seed development by promoting stamen elongation and, to a lesser extent, anther dehiscence and pollen maturation, probably as auxin transporters. Mediates the accumulation of chlorophyll and anthocyanin, as well as the expression of genes in response to light. Participates directly in auxin efflux and thus regulates the polar (presumably basipetal) auxin transport (from root tips to root elongating zone). Also transports some auxin metabolites such as oxindoleacetic acid and indoleacetaldehyde. Involved in diverse auxin-mediated responses including gravitropism, phototropism and lateral root formation. Confers resistance to herbicides such as dicamba, pendimethalin, oryzalin, and monosodium acid methanearsonate (MSMA), but not to herbicides such as glyphosate, atrazine, bentazon and fluazifop-p-butyl. Also mediates resistance to xenobiotics such as cycloheximide and the cytokinin N6-(2-isopentenyl)adenine (2IP). The chain is ABC transporter B family member 1 from Arabidopsis thaliana (Mouse-ear cress).